Reading from the N-terminus, the 230-residue chain is Phosphoglycolate phosphatase (230 aa).

Aspartate 9 functions as the Nucleophile in the catalytic mechanism. The Mg(2+) site is built by aspartate 9, aspartate 11, and aspartate 175.

This sequence belongs to the HAD-like hydrolase superfamily. CbbY/CbbZ/Gph/YieH family. It depends on Mg(2+) as a cofactor.

It carries out the reaction 2-phosphoglycolate + H2O = glycolate + phosphate. Its pathway is organic acid metabolism; glycolate biosynthesis; glycolate from 2-phosphoglycolate: step 1/1. Functionally, specifically catalyzes the dephosphorylation of 2-phosphoglycolate. Is involved in the dissimilation of the intracellular 2-phosphoglycolate formed during the DNA repair of 3'-phosphoglycolate ends, a major class of DNA lesions induced by oxidative stress. This is Phosphoglycolate phosphatase from Psychrobacter arcticus (strain DSM 17307 / VKM B-2377 / 273-4).